The following is a 162-amino-acid chain: Large ribosomal subunit protein uL10 (162 aa).

It belongs to the universal ribosomal protein uL10 family. Part of the ribosomal stalk of the 50S ribosomal subunit. The N-terminus interacts with L11 and the large rRNA to form the base of the stalk. The C-terminus forms an elongated spine to which L12 dimers bind in a sequential fashion forming a multimeric L10(L12)X complex.

Functionally, forms part of the ribosomal stalk, playing a central role in the interaction of the ribosome with GTP-bound translation factors. The protein is Large ribosomal subunit protein uL10 of Vibrio vulnificus (strain CMCP6).